The following is a 155-amino-acid chain: Plastocyanin, chloroplastic (155 aa).

The transit peptide at 1 to 58 (MAALSSAAVSVPSFAAATPMRSSRSSRMVVRASLGKKAASAAVAMAAGAMLLGGSAMA) directs the protein to the chloroplast. Residues 59 to 155 (QDVLLGANGG…AGMVGKVTVN (97 aa)) form the Plastocyanin-like domain. His-95, Cys-140, His-143, and Met-148 together coordinate Cu cation.

The protein belongs to the plastocyanin family. The cofactor is Cu(2+).

It is found in the plastid. Its subcellular location is the chloroplast thylakoid membrane. Its function is as follows. Participates in electron transfer between P700 and the cytochrome b6-f complex in photosystem I. The protein is Plastocyanin, chloroplastic (PETE) of Hordeum vulgare (Barley).